A 552-amino-acid polypeptide reads, in one-letter code: Two-component response regulator ARR10 (552 aa).

A Response regulatory domain is found at 18–133 (RVLAVDDDQT…ELKNIWQHVV (116 aa)). At D69 the chain carries 4-aspartylphosphate. Positions 139–181 (KKNKSNVSNGSGNCDKANRKRKEQYEEEEEEERGNDNDDPTAQ) are disordered. Residues 151–173 (NCDKANRKRKEQYEEEEEEERGN) are a coiled coil. Residues 163-177 (YEEEEEEERGNDNDD) show a composition bias toward acidic residues. A Nuclear localization signal motif is present at residues 182 to 185 (KKPR). Residues 185-235 (RVLWTHELHNKFLAAVDHLGVERAVPKKILDLMNVDKLTRENVASHLQKFR) constitute a DNA-binding region (myb-like GARP).

The protein belongs to the ARR family. Type-B subfamily. Binds the target DNA as a monomer. In terms of processing, two-component system major event consists of a His-to-Asp phosphorelay between a sensor histidine kinase (HK) and a response regulator (RR). In plants, the His-to-Asp phosphorelay involves an additional intermediate named Histidine-containing phosphotransfer protein (HPt). This multistep phosphorelay consists of a His-Asp-His-Asp sequential transfer of a phosphate group between first a His and an Asp of the HK protein, followed by the transfer to a conserved His of the HPt protein and finally the transfer to an Asp in the receiver domain of the RR protein. Detected in the whole plant. Predominantly expressed in roots and leaves.

The protein resides in the nucleus. In terms of biological role, transcriptional activator that binds specifically to the DNA sequence 5'-[AG]GATT-3'. Functions as a response regulator involved in His-to-Asp phosphorelay signal transduction system. Phosphorylation of the Asp residue in the receiver domain activates the ability of the protein to promote the transcription of target genes. Could directly activate some type-A response regulators in response to cytokinins. The sequence is that of Two-component response regulator ARR10 (ARR10) from Arabidopsis thaliana (Mouse-ear cress).